Reading from the N-terminus, the 68-residue chain is Small ribosomal subunit protein bS21 (68 aa).

A compositionally biased stretch (basic and acidic residues) spans 37–49; the sequence is EKPSEKRAREKAA. A disordered region spans residues 37 to 68; it reads EKPSEKRAREKAAAVRRARKMERKRMERDGIK. Basic residues predominate over residues 50–59; the sequence is AVRRARKMER.

The protein belongs to the bacterial ribosomal protein bS21 family.

This chain is Small ribosomal subunit protein bS21, found in Erythrobacter litoralis (strain HTCC2594).